The chain runs to 142 residues: Large ribosomal subunit protein uL13 (142 aa).

Belongs to the universal ribosomal protein uL13 family. In terms of assembly, part of the 50S ribosomal subunit.

Functionally, this protein is one of the early assembly proteins of the 50S ribosomal subunit, although it is not seen to bind rRNA by itself. It is important during the early stages of 50S assembly. The sequence is that of Large ribosomal subunit protein uL13 from Geobacter sp. (strain M21).